The following is a 401-amino-acid chain: Imidazolonepropionase (401 aa).

Fe(3+) is bound by residues His-70 and His-72. Residues His-70 and His-72 each coordinate Zn(2+). Positions 79, 142, and 175 each coordinate 4-imidazolone-5-propanoate. Residue Tyr-142 coordinates N-formimidoyl-L-glutamate. His-240 contributes to the Fe(3+) binding site. His-240 contacts Zn(2+). Position 243 (Gln-243) interacts with 4-imidazolone-5-propanoate. Asp-315 is a Fe(3+) binding site. Position 315 (Asp-315) interacts with Zn(2+). Residues Asn-317 and Gly-319 each coordinate N-formimidoyl-L-glutamate. Thr-320 is a 4-imidazolone-5-propanoate binding site.

The protein belongs to the metallo-dependent hydrolases superfamily. HutI family. The cofactor is Zn(2+). It depends on Fe(3+) as a cofactor.

Its subcellular location is the cytoplasm. It carries out the reaction 4-imidazolone-5-propanoate + H2O = N-formimidoyl-L-glutamate. The protein operates within amino-acid degradation; L-histidine degradation into L-glutamate; N-formimidoyl-L-glutamate from L-histidine: step 3/3. Its function is as follows. Catalyzes the hydrolytic cleavage of the carbon-nitrogen bond in imidazolone-5-propanoate to yield N-formimidoyl-L-glutamate. It is the third step in the universal histidine degradation pathway. This chain is Imidazolonepropionase, found in Caulobacter vibrioides (strain ATCC 19089 / CIP 103742 / CB 15) (Caulobacter crescentus).